Consider the following 483-residue polypeptide: Aspartyl/glutamyl-tRNA(Asn/Gln) amidotransferase subunit B (483 aa).

Belongs to the GatB/GatE family. GatB subfamily. In terms of assembly, heterotrimer of A, B and C subunits.

The catalysed reaction is L-glutamyl-tRNA(Gln) + L-glutamine + ATP + H2O = L-glutaminyl-tRNA(Gln) + L-glutamate + ADP + phosphate + H(+). It catalyses the reaction L-aspartyl-tRNA(Asn) + L-glutamine + ATP + H2O = L-asparaginyl-tRNA(Asn) + L-glutamate + ADP + phosphate + 2 H(+). Allows the formation of correctly charged Asn-tRNA(Asn) or Gln-tRNA(Gln) through the transamidation of misacylated Asp-tRNA(Asn) or Glu-tRNA(Gln) in organisms which lack either or both of asparaginyl-tRNA or glutaminyl-tRNA synthetases. The reaction takes place in the presence of glutamine and ATP through an activated phospho-Asp-tRNA(Asn) or phospho-Glu-tRNA(Gln). In Rickettsia rickettsii (strain Iowa), this protein is Aspartyl/glutamyl-tRNA(Asn/Gln) amidotransferase subunit B.